A 340-amino-acid polypeptide reads, in one-letter code: ATPase GET3 (340 aa).

An ATP-binding site is contributed by 35–42; the sequence is KGGVGKTT. Residue Asp64 is part of the active site. Residues Glu245 and Asn272 each coordinate ATP. Residues Cys283 and Cys286 each contribute to the Zn(2+) site.

Belongs to the arsA ATPase family. In terms of assembly, homodimer.

The protein resides in the cytoplasm. Its subcellular location is the endoplasmic reticulum. In terms of biological role, ATPase required for the post-translational delivery of tail-anchored (TA) proteins to the endoplasmic reticulum. Recognizes and selectively binds the transmembrane domain of TA proteins in the cytosol. This complex then targets to the endoplasmic reticulum by membrane-bound receptors, where the tail-anchored protein is released for insertion. This process is regulated by ATP binding and hydrolysis. ATP binding drives the homodimer towards the closed dimer state, facilitating recognition of newly synthesized TA membrane proteins. ATP hydrolysis is required for insertion. Subsequently, the homodimer reverts towards the open dimer state, lowering its affinity for the membrane-bound receptor, and returning it to the cytosol to initiate a new round of targeting. This is ATPase GET3 from Chaetomium globosum (strain ATCC 6205 / CBS 148.51 / DSM 1962 / NBRC 6347 / NRRL 1970) (Soil fungus).